The sequence spans 366 residues: Galactoside alpha-(1,2)-fucosyltransferase 1 (366 aa).

At methionine 1–histidine 8 the chain is on the cytoplasmic side. A helical; Signal-anchor for type II membrane protein membrane pass occupies residues leucine 9 to phenylalanine 25. Residues leucine 26 to proline 366 are Lumenal-facing. N-linked (GlcNAc...) asparagine glycosylation is found at asparagine 66, asparagine 302, and asparagine 328.

It belongs to the glycosyltransferase 11 family.

The protein localises to the golgi apparatus. The protein resides in the golgi stack membrane. It catalyses the reaction a beta-D-galactosyl-(1-&gt;4)-N-acetyl-beta-D-glucosaminyl derivative + GDP-beta-L-fucose = an alpha-L-Fuc-(1-&gt;2)-beta-D-Gal-(1-&gt;4)-beta-D-GlcNAc derivative + GDP + H(+). The enzyme catalyses a ganglioside GA1 + GDP-beta-L-fucose = a ganglioside Fuc-GA1 + GDP + H(+). It carries out the reaction a beta-D-Gal-(1-&gt;3)-beta-D-GlcNAc-(1-&gt;3)-beta-D-Gal-(1-&gt;4)-beta-D-Glc-(1&lt;-&gt;1')-Cer(d18:1(4E)) + GDP-beta-L-fucose = alpha-L-fucosyl-(1-&gt;2)- beta-D-galactosyl-(1-&gt;3)-N-acetyl-beta-D-glucosaminyl-(1-&gt;3)-beta-D-galactosyl-(1-&gt;4)-beta-D-glucosyl-(1&lt;-&gt;1')-N-acylsphing-4-enine + GDP + H(+). The catalysed reaction is a neolactoside nLc4Cer(d18:1(4E)) + GDP-beta-L-fucose = a neolactoside IV(2)-alpha-Fuc-nLc4Cer(d18:1(4E)) + GDP + H(+). It catalyses the reaction a ganglioside GM1 + GDP-beta-L-fucose = a ganglioside Fuc-GM1 + GDP + H(+). The enzyme catalyses beta-D-galactosyl-(1-&gt;3)-N-acetyl-D-galactosamine + GDP-beta-L-fucose = alpha-L-fucosyl-(1-&gt;2)-beta-D-galactosyl-(1-&gt;3)-N-acetyl-D-galactosamine + GDP + H(+). The protein operates within protein modification; protein glycosylation. Its function is as follows. Catalyzes the transfer of L-fucose, from a guanosine diphosphate-beta-L-fucose, to the terminal galactose residue of glycoconjugates through an alpha(1,2) linkage leading to H antigen synthesis that is an intermediate substrate in the synthesis of ABO blood group antigens. H antigen is essential for maturation of the glomerular layer of the main olfactory bulb, in cell migration and early cell-cell contacts during tumor associated angiogenesis. Preferentially fucosylates soluble lactose and to a lesser extent fucosylates glycolipids gangliosides GA1 and GM1a. The protein is Galactoside alpha-(1,2)-fucosyltransferase 1 of Plecturocebus brunneus (Brown titi monkey).